The chain runs to 241 residues: Major prion protein (241 aa).

The N-terminal stretch at 1–15 is a signal peptide; the sequence is MLVLFVATWSDLGLC. The interaction with ADGRG6 stretch occupies residues 16 to 31; that stretch reads KKRPKPGGWNTGGSRY. An interaction with GRB2, ERI3 and SYN1 region spans residues 16-223; that stretch reads KKRPKPGGWN…ESQAYYQRGS (208 aa). The disordered stretch occupies residues 18-100; that stretch reads RPKPGGWNTG…QWNKPSKPKT (83 aa). Repeat copies occupy residues 44-52, 53-60, 61-68, 69-76, and 77-84. Residues 44-84 form a 5 X 8 AA tandem repeats of P-H-G-G-G-W-G-Q region; the sequence is PQGGGSWGQPHGGGWGQPHGGGWGQPHGGGWGQPHGGGWGQ. The span at 45–88 shows a compositional bias: gly residues; sequence QGGGSWGQPHGGGWGQPHGGGWGQPHGGGWGQPHGGGWGQGGGT. The Cu(2+) site is built by H54, G55, G56, H62, G63, G64, H70, G71, G72, H78, G79, and G80. Residues C172 and C207 are joined by a disulfide bond. N-linked (GlcNAc...) asparagine glycosylation is found at N174 and N190. S223 carries the GPI-anchor amidated serine lipid modification. A propeptide spans 224 to 241 (removed in mature form); it reads SMVLFSSPPVILLISFLI.

This sequence belongs to the prion family. Monomer and homodimer. Has a tendency to aggregate into amyloid fibrils containing a cross-beta spine, formed by a steric zipper of superposed beta-strands. Soluble oligomers may represent an intermediate stage on the path to fibril formation. Copper binding may promote oligomerization. Interacts with GRB2, APP, ERI3/PRNPIP and SYN1. Mislocalized cytosolically exposed PrP interacts with MGRN1; this interaction alters MGRN1 subcellular location and causes lysosomal enlargement. Interacts with APP. Interacts with KIAA1191. Interacts with ADGRG6.

It localises to the cell membrane. The protein localises to the golgi apparatus. Functionally, its primary physiological function is unclear. May play a role in neuronal development and synaptic plasticity. May be required for neuronal myelin sheath maintenance. May promote myelin homeostasis through acting as an agonist for ADGRG6 receptor. May play a role in iron uptake and iron homeostasis. Soluble oligomers are toxic to cultured neuroblastoma cells and induce apoptosis (in vitro). Association with GPC1 (via its heparan sulfate chains) targets PRNP to lipid rafts. Also provides Cu(2+) or Zn(2+) for the ascorbate-mediated GPC1 deaminase degradation of its heparan sulfate side chains. The chain is Major prion protein (PRNP) from Plecturocebus moloch (Dusky titi monkey).